We begin with the raw amino-acid sequence, 249 residues long: Triosephosphate isomerase (249 aa).

Substrate-binding residues include asparagine 12 and lysine 14. The residue at position 14 (lysine 14) is an N6-acetyllysine. Deamidated asparagine is present on asparagine 16. A 3'-nitrotyrosine modification is found at tyrosine 68. Asparagine 72 bears the Deamidated asparagine mark. Position 80 is a phosphoserine (serine 80). The Electrophile role is filled by histidine 96. At serine 106 the chain carries Phosphoserine. Residue lysine 142 forms a Glycyl lysine isopeptide (Lys-Gly) (interchain with G-Cter in SUMO1) linkage. At lysine 149 the chain carries N6-succinyllysine. An N6-acetyllysine; alternate modification is found at lysine 156. N6-succinyllysine; alternate is present on lysine 156. A Phosphoserine modification is found at serine 159. The Proton acceptor role is filled by glutamate 166. Phosphothreonine is present on threonine 173. The residue at position 194 (lysine 194) is an N6-acetyllysine; alternate. Lysine 194 is modified (N6-succinyllysine; alternate). Lysine 194 is modified (N6-methyllysine; alternate). The residue at position 198 (serine 198) is a Phosphoserine. Tyrosine 209 is subject to 3'-nitrotyrosine. A Phosphoserine modification is found at serine 212. Threonine 214 carries the phosphothreonine modification. Serine 223 is modified (phosphoserine). Lysine 238 carries the N6-acetyllysine modification.

Belongs to the triosephosphate isomerase family. In terms of assembly, homodimer. Asn-16 and Asn-72 undergo deamidation which gives rise to four extra negative charges. These are expected to decrease subunit-subunit interactions and so expose the hydrophobic interface to the aqueous environment.

It localises to the cytoplasm. The catalysed reaction is D-glyceraldehyde 3-phosphate = dihydroxyacetone phosphate. The enzyme catalyses dihydroxyacetone phosphate = methylglyoxal + phosphate. It participates in carbohydrate degradation; glycolysis; D-glyceraldehyde 3-phosphate from glycerone phosphate: step 1/1. It functions in the pathway carbohydrate biosynthesis; gluconeogenesis. In terms of biological role, triosephosphate isomerase is an extremely efficient metabolic enzyme that catalyzes the interconversion between dihydroxyacetone phosphate (DHAP) and D-glyceraldehyde-3-phosphate (G3P) in glycolysis and gluconeogenesis. Its function is as follows. It is also responsible for the non-negligible production of methylglyoxal a reactive cytotoxic side-product that modifies and can alter proteins, DNA and lipids. The sequence is that of Triosephosphate isomerase (TPI1) from Oryctolagus cuniculus (Rabbit).